The following is a 2359-amino-acid chain: Pre-mRNA-processing-splicing factor 8A (2359 aa).

Positions 1 to 54 (MWNNNDGMPLAPPGTGGSMMPPPPAAHPSYTALPPPSNPTPPVEPTPEEAEAKL) are disordered. The span at 33-45 (LPPPSNPTPPVEP) shows a compositional bias: pro residues. The region spanning 2127–2258 (TYIMPKNILK…LTSYKLTQTG (132 aa)) is the MPN domain.

In terms of assembly, interacts with CLO.

It is found in the nucleus. Its function is as follows. Functions as a scaffold that mediates the ordered assembly of spliceosomal proteins and snRNAs. Required for the assembly of the U4/U6-U5 tri-snRNP complex. Required for embryo development. Required for splicing efficiency of COOLAIR introns and usage of the proximal poly(A) site. COOLAIR is a set of long non-coding antisense transcripts produced at the FLOWERING LOCUS C (FLC). COOLAIR initiates just downstream of the major sense transcript poly(A) site and terminates either early or extends into the FLC promoter region. Splicing of COOLAIR by PRP8A is functionally important for FLC regulation. The sequence is that of Pre-mRNA-processing-splicing factor 8A from Arabidopsis thaliana (Mouse-ear cress).